A 956-amino-acid polypeptide reads, in one-letter code: Endogenous retrovirus group K member 8 Pol protein (956 aa).

Residues 57–245 (LEKGHIEPSF…TPFHYLGMQI (189 aa)) enclose the Reverse transcriptase domain. The short motif at 161–164 (LPQG) is the LPQG element. The YXDD signature appears at 195 to 198 (YIDD). Residues 460-590 (LENALTVFTD…ADLLVSSALI (131 aa)) form the RNase H type-1 domain. Aspartate 469, glutamate 497, aspartate 517, and aspartate 582 together coordinate Mg(2+). The segment at 587–628 (SALIKAQELHALTHVNAAGLKNKFDVTWKQAKDIVQHCTQCQ) adopts an Integrase-type zinc-finger fold. Zn(2+)-binding residues include histidine 596, histidine 600, cysteine 624, and cysteine 627. One can recognise an Integrase catalytic domain in the interval 642–803 (RGLCPNALWQ…TSAEQHLTGK (162 aa)). The segment at residues 811–859 (KLIWWKDNKNKTWEIGKVITWGRGFACVSPGENQLPVWIPTRHLKFYNE) is a DNA-binding region (integrase-type). Residues 864–890 (AKKSTSAETETPQSSTVDSQDEQNGDV) form a disordered region. Positions 869–881 (SAETETPQSSTVD) are enriched in polar residues.

This sequence belongs to the beta type-B retroviral polymerase family. HERV class-II K(HML-2) pol subfamily.

The enzyme catalyses DNA(n) + a 2'-deoxyribonucleoside 5'-triphosphate = DNA(n+1) + diphosphate. The catalysed reaction is Endonucleolytic cleavage to 5'-phosphomonoester.. In terms of biological role, early post-infection, the reverse transcriptase converts the viral RNA genome into double-stranded viral DNA. The RNase H domain of the reverse transcriptase performs two functions. It degrades the RNA template and specifically removes the RNA primer from the RNA/DNA hybrid. Following nuclear import, the integrase catalyzes the insertion of the linear, double-stranded viral DNA into the host cell chromosome. Endogenous Pol proteins may have kept, lost or modified their original function during evolution. The protein is Endogenous retrovirus group K member 8 Pol protein (ERVK-8) of Homo sapiens (Human).